A 181-amino-acid polypeptide reads, in one-letter code: CASP-like protein 5A1 (181 aa).

The Cytoplasmic portion of the chain corresponds to 1 to 38 (MFASRPVVHPLEVAAPAHPVQQPAPGVLMKDLPGMPGT). Residues 39 to 59 (PGGLGLRVLQLLFAAISLAVM) traverse the membrane as a helical segment. At 60-77 (SSTADFASVSAFCYLITT) the chain is on the extracellular side. Residues 78–98 (TVLQCVWSLTVAIVDIYALLV) form a helical membrane-spanning segment. Residues 99–115 (KRCLQNRRAVTLFSIGD) lie on the Cytoplasmic side of the membrane. A helical membrane pass occupies residues 116 to 136 (GITWLVSFSGACAAAGIPVLI). The Extracellular segment spans residues 137–153 (DADLIMCSENPCASFQT). A helical membrane pass occupies residues 154–174 (AVAMGFMCCFSLLPSFLLNFY). Residues 175–181 (SIASSHG) are Cytoplasmic-facing.

Belongs to the Casparian strip membrane proteins (CASP) family. Homodimer and heterodimers.

It is found in the cell membrane. In Zea mays (Maize), this protein is CASP-like protein 5A1.